A 308-amino-acid polypeptide reads, in one-letter code: Pantoate--beta-alanine ligase (308 aa).

Position 2 (alanine 2) is a propeptide, removed; partial.

The protein belongs to the pantothenate synthetase family. In terms of assembly, homodimer. As to expression, expressed at low levels in leaf and root.

Its subcellular location is the cytoplasm. It catalyses the reaction (R)-pantoate + beta-alanine + ATP = (R)-pantothenate + AMP + diphosphate + H(+). It functions in the pathway cofactor biosynthesis; (R)-pantothenate biosynthesis; (R)-pantothenate from (R)-pantoate and beta-alanine: step 1/1. The protein is Pantoate--beta-alanine ligase (PANC) of Lotus japonicus (Lotus corniculatus var. japonicus).